Consider the following 651-residue polypeptide: p-hydroxybenzoic acid efflux pump subunit AaeB (651 aa).

Helical transmembrane passes span F11 to L31, A41 to I61, L67 to I87, V91 to V111, F119 to L139, E150 to I170, L368 to V388, F405 to P425, Q429 to V449, L460 to F480, and L481 to I501.

The protein belongs to the aromatic acid exporter ArAE (TC 2.A.85) family.

The protein resides in the cell inner membrane. Its function is as follows. Forms an efflux pump with AaeA. Could function as a metabolic relief valve, allowing to eliminate certain compounds when they accumulate to high levels in the cell. In Yersinia enterocolitica serotype O:8 / biotype 1B (strain NCTC 13174 / 8081), this protein is p-hydroxybenzoic acid efflux pump subunit AaeB.